A 369-amino-acid chain; its full sequence is Nuclear pore complex-interacting protein family member A6 (369 aa).

The disordered stretch occupies residues 151-170 (SMKEREHGEKERQVSEAEEN).

It belongs to the NPIP family.

The chain is Nuclear pore complex-interacting protein family member A6 from Homo sapiens (Human).